Here is a 132-residue protein sequence, read N- to C-terminus: Ribosome-binding factor A (132 aa).

It belongs to the RbfA family. Monomer. Binds 30S ribosomal subunits, but not 50S ribosomal subunits or 70S ribosomes.

Its subcellular location is the cytoplasm. One of several proteins that assist in the late maturation steps of the functional core of the 30S ribosomal subunit. Associates with free 30S ribosomal subunits (but not with 30S subunits that are part of 70S ribosomes or polysomes). Required for efficient processing of 16S rRNA. May interact with the 5'-terminal helix region of 16S rRNA. In Edwardsiella ictaluri (strain 93-146), this protein is Ribosome-binding factor A.